A 508-amino-acid chain; its full sequence is O-acetyltransferase pigM (508 aa).

The segment at 166–188 (TPAPDERGKISPSLEDAAGSPRT) is disordered.

The protein operates within secondary metabolite biosynthesis. In terms of biological role, O-acetyltransferase; part of the gene cluster that mediates the biosynthesis of azaphilone pigments (MonAzPs), a complex mixture of compounds with a common azaphilone skeleton very widely used as food colorants. PigM and pigO are involved in the elimination of the omega-1 alcohol with pigM acting as an O-acetyltransferase that synthesizes the O-11 acetyl intermediate whereas pigO eliminates acetic acid to yield an intermediate with a C10(11) double bond. The first step of the pathway is performed by the nrPKS pigA that forms the hexaketide precursor from successive condensations of five malonyl-CoA units, with a simple acetyl-CoA starter unit. The role of esterase pigG is not clear, but it may play at most a supplementary role in the formation of the benzaldehyde produced by the pigA nrPKS. This very reactive benzaldehyde is intercepted by the pigC ketoreductase that to provide the first stable enzyme-free MonAzPs intermediate, 6-(4-hydroxy-2-oxopentyl)-3-methyl-2,4-dioxocyclohexane carbaldehyde, also known as M7PKS-1. The FAD-dependent monooxygenase pigN hydroxylates M7PKS-1 at C-4, which triggers the formation of the pyran ring. PigJ, pigK and pigD are involved in the acetylation of the pyran ring. PigJ and pigK form the two subunits of a dedicated fungal FAS that produces the side chain fatty acyl moiety of MonAzPs and pigD transfers the fatty acyl chain to the C-4 alcohol. PigM and pigO are involved in the elimination of the omega-1 alcohol. PigM acts as an O-acetyltransferase that synthesizes the putative O-11 acetyl intermediate whereas pigO eliminates acetic acid to yield an intermediate with a C10(11) double bond. The dehydration of the C-11 alcohol followed by the reduction of the C6(7) double bond by the NAD(P)H-dependent oxidoreductase pigE increases the electrophilicity of the C-5 ketone of the resulting acyl benzopyran. This in turn sets up the C-5 ketone for an intramolecular Knoevenagel aldol condensation with the C-20 enol of the side chain. This condensation affords the characteristic linear tricyclic carbon skeletons of the yellow pigments that serve as the common precursors for the classical yellow pigments monascin and ankaflavin, orange pigments rubopunctatin and monascorubrin, and red pigments ribropunctamine and monascorubramine. The FAD-dependent oxidoreductase pigF is especially invoved in the biosynthesis of orange and red pigments via desaturation of C6(7). This Monascus ruber (Mold) protein is O-acetyltransferase pigM.